The chain runs to 366 residues: MKFTVEREHLLKPLQQVSGPLGGRPTLPILGNLLLQVADGTLSLTGTDLEMEMVARVALVQPHEPGATTVPARKFFDICRGLPEGAEIAVQLEGERMLVRSGRSRFSLSTLPAADFPNLDDWQSEVEFTLPQATMKRLIEATQFSMAHQDVRYYLNGMLFETEGEELRTVATDGHRLAVCSMPIGQSLPSHSVIVPRKGVIELMRMLDGGDNPLRVQIGSNNIRAHVGDFIFTSKLVDGRFPDYRRVLPKNPDKHLEAGCDLLKQAFARAAILSNEKFRGVRLYVSENQLKITANNPEQEEAEEILDVTYSGAEMEIGFNVSYVLDVLNALKCENVRMMLTDSVSSVQIEDAASQSAAYVVMPMRL.

Residues 1–125 (MKFTVEREHL…FPNLDDWQSE (125 aa)) form an i region. An II region spans residues 126 to 253 (VEFTLPQATM…YRRVLPKNPD (128 aa)). Positions 254–366 (KHLEAGCDLL…AAYVVMPMRL (113 aa)) are III.

The protein belongs to the beta sliding clamp family. In terms of assembly, forms a ring-shaped head-to-tail homodimer around DNA which binds and tethers DNA polymerases and other proteins to the DNA. The DNA replisome complex has a single clamp-loading complex (3 tau and 1 each of delta, delta', psi and chi subunits) which binds 3 Pol III cores (1 core on the leading strand and 2 on the lagging strand) each with a beta sliding clamp dimer. Additional proteins in the replisome are other copies of gamma, psi and chi, Ssb, DNA helicase and RNA primase.

It localises to the cytoplasm. In terms of biological role, confers DNA tethering and processivity to DNA polymerases and other proteins. Acts as a clamp, forming a ring around DNA (a reaction catalyzed by the clamp-loading complex) which diffuses in an ATP-independent manner freely and bidirectionally along dsDNA. Initially characterized for its ability to contact the catalytic subunit of DNA polymerase III (Pol III), a complex, multichain enzyme responsible for most of the replicative synthesis in bacteria; Pol III exhibits 3'-5' exonuclease proofreading activity. The beta chain is required for initiation of replication as well as for processivity of DNA replication. In Escherichia coli O157:H7, this protein is Beta sliding clamp (dnaN).